Consider the following 247-residue polypeptide: 3-deoxy-manno-octulosonate cytidylyltransferase (247 aa).

The protein belongs to the KdsB family.

Its subcellular location is the cytoplasm. It catalyses the reaction 3-deoxy-alpha-D-manno-oct-2-ulosonate + CTP = CMP-3-deoxy-beta-D-manno-octulosonate + diphosphate. The protein operates within nucleotide-sugar biosynthesis; CMP-3-deoxy-D-manno-octulosonate biosynthesis; CMP-3-deoxy-D-manno-octulosonate from 3-deoxy-D-manno-octulosonate and CTP: step 1/1. It participates in bacterial outer membrane biogenesis; lipopolysaccharide biosynthesis. Functionally, activates KDO (a required 8-carbon sugar) for incorporation into bacterial lipopolysaccharide in Gram-negative bacteria. The protein is 3-deoxy-manno-octulosonate cytidylyltransferase of Methylobacterium nodulans (strain LMG 21967 / CNCM I-2342 / ORS 2060).